Reading from the N-terminus, the 455-residue chain is Exodeoxyribonuclease 7 large subunit (455 aa).

The protein belongs to the XseA family. As to quaternary structure, heterooligomer composed of large and small subunits.

Its subcellular location is the cytoplasm. The enzyme catalyses Exonucleolytic cleavage in either 5'- to 3'- or 3'- to 5'-direction to yield nucleoside 5'-phosphates.. Bidirectionally degrades single-stranded DNA into large acid-insoluble oligonucleotides, which are then degraded further into small acid-soluble oligonucleotides. In Escherichia fergusonii (strain ATCC 35469 / DSM 13698 / CCUG 18766 / IAM 14443 / JCM 21226 / LMG 7866 / NBRC 102419 / NCTC 12128 / CDC 0568-73), this protein is Exodeoxyribonuclease 7 large subunit.